A 482-amino-acid polypeptide reads, in one-letter code: Histone deacetylase 1 (482 aa).

Positions R9–D321 are histone deacetylase. 2 residues coordinate 1D-myo-inositol 1,4,5,6-tetrakisphosphate: G27 and K31. K74 is subject to N6-acetyllysine; alternate. Residue K74 forms a Glycyl lysine isopeptide (Lys-Gly) (interchain with G-Cter in SUMO2); alternate linkage. H141 is an active-site residue. Residues D176 and H178 each contribute to the Zn(2+) site. K220 is modified (N6-acetyllysine). C261 carries the post-translational modification S-nitrosocysteine. D264 contributes to the Zn(2+) binding site. Residue R270 participates in 1D-myo-inositol 1,4,5,6-tetrakisphosphate binding. Residue C273 is modified to S-nitrosocysteine. Positions P390–D400 are enriched in acidic residues. The tract at residues P390–A482 is disordered. Residues S393, S406, and S409 each carry the phosphoserine modification. Residues P401–C416 are compositionally biased toward basic and acidic residues. A compositionally biased stretch (acidic residues) spans E417–G427. S421 and S423 each carry phosphoserine; by CK2. The residue at position 432 (K432) is an N6-methylated lysine; by EHMT2. A Glycyl lysine isopeptide (Lys-Gly) (interchain with G-Cter in SUMO2) cross-link involves residue K438. The segment covering V443–A482 has biased composition (basic and acidic residues). A Glycyl lysine isopeptide (Lys-Gly) (interchain with G-Cter in SUMO2); alternate cross-link involves residue K444. K444 participates in a covalent cross-link: Glycyl lysine isopeptide (Lys-Gly) (interchain with G-Cter in SUMO); alternate. Residues K456, K457, and K473 each participate in a glycyl lysine isopeptide (Lys-Gly) (interchain with G-Cter in SUMO2) cross-link. K476 is covalently cross-linked (Glycyl lysine isopeptide (Lys-Gly) (interchain with G-Cter in SUMO2); alternate). Residue K476 forms a Glycyl lysine isopeptide (Lys-Gly) (interchain with G-Cter in SUMO); alternate linkage. K480 participates in a covalent cross-link: Glycyl lysine isopeptide (Lys-Gly) (interchain with G-Cter in SUMO2).

This sequence belongs to the histone deacetylase family. HD type 1 subfamily. In terms of assembly, part of the core histone deacetylase (HDAC) complex composed of HDAC1, HDAC2, RBBP4 and RBBP7, the core complex associates with SIN3, SAP18 and SAP30 to form the SIN3 HDAC complex. Component of the nucleosome remodeling and deacetylase (NuRD) repressor complex, composed of core proteins MTA1, MTA2, MTA3, RBBP4, RBBP7, HDAC1, HDAC2, MBD2, MBD3, and peripherally associated proteins CDK2AP1, CDK2AP2, GATAD2A, GATAD2B, CHD3, CHD4 and CHD5. The exact stoichiometry of the NuRD complex is unknown, and some subunits such as MBD2 and MBD3, GATAD2A and GATAD2B, and CHD3, CHD4 and CHD5 define mutually exclusive NuRD complexes. Component of a BHC histone deacetylase complex that contains HDAC1, HDAC2, HMG20B/BRAF35, KDM1A, RCOR1/CoREST and PHF21A/BHC80. The BHC complex may also contain ZMYM2, ZNF217, ZMYM3, GSE1 and GTF2I. Component of a mSin3A corepressor complex that contains SIN3A, SAP130, SUDS3/SAP45, ARID4B/SAP180, HDAC1 and HDAC2. Component of the SIN3B complex, which includes SIN3B, HDAC1, PHF12 and MORF4L1. Found in a trimeric complex with APBB1 and TSHZ3; the interaction between HDAC1 and APBB1 is mediated by TSHZ3. Forms a complex comprising APPL1, RUVBL2, APPL2, CTNNB1 and HDAC2. Component of a RCOR/GFI/KDM1A/HDAC complex. Part of a complex composed of TRIM28, HDAC1, HDAC2 and EHMT2. Part of a complex containing at least CDYL, MIER1, MIER2, HDAC1 and HDAC2. The large PER complex involved in the histone deacetylation is composed of at least HDAC1, PER2, SFPQ and SIN3A. Associates with the 9-1-1 complex; interacts with HUS1. Found in a complex with DNMT3A and HDAC7. Found in a complex with YY1, SIN3A and GON4L. Identified in a histone deacetylase complex that contains DNTTIP1, HDAC1 and MIDEAS; this complex assembles into a tetramer that contains four copies of each protein chain. Found in a complex composed of at least SINHCAF, SIN3A, HDAC1, SAP30, RBBP4, OGT and TET1. Interacts with GFI1; the interaction is direct. Interacts directly with GFI1B. Interacts with TSHZ3 (via N-terminus); the interaction is direct. Interacts with APEX1; the interaction is not dependent on the acetylated status of APEX1. Interacts with BANP. Interacts with BAZ2A/TIP5. Interacts with BCL6. Interacts with BCOR. Interacts with BHLHE40/DEC1. Interacts with BRCC3; this interaction is enhanced in the presence of PWWP2B. Interacts with BRMS1. Interacts with BRMS1L. Interacts with C10orf90/FATS (via its N-terminal); the interaction prevents binding of HDAC1 to CDKN1A/p21 and facilitates the acetylation and stabilization of CDKN1A/p21. Interacts with CBFA2T3. Interacts with CCAR2. Interacts with CDK2AP1. Interacts with CHD3. Interacts with CHD4. Interacts with CHFR. Interacts with CIART. Interacts with CDKN1A/p21. Interacts with CDK5 complexed to CDK5R1 (p25). Interacts with CRY1. Interacts with DAXX. Interacts with DDIT3/CHOP. Interacts with DDX5. Interacts with DHX36; this interaction occurs in a RNA-dependent manner. Interacts with DNMT1. Interacts with DNTTIP1. Interacts with E4F1. Interacts with EP300. Interacts with ERCC6. Interacts with GATAD2A. Interacts with HCFC1. Interacts with HDAC9. Interacts with HUS1. Interacts with INSM1. Interacts with KDM4A. Interacts with KDM5A; this interaction impairs histone deacetylation. Interacts with KDM5B. Interacts with KLF1. Interacts with MBD3L2. Interacts with MIER1. Interacts with NFE4. Interacts with NR4A2/NURR1. Interacts with NR1D2 (via C-terminus). Interacts with NRIP1. Interacts with NSD2. Interacts with PACS2. Interacts with PHB2. Interacts with PPHLN1. Interacts with PRDM6. Interacts with PRDM16. Interacts with PWWP2A in a MTA1-dependent manner. Interacts with PWWP2B. Interacts with RB1. Interacts with RERE. Interacts with SANBR (via the BTB domain). Interacts with SAMSN1. Interacts with SAP30L. Interacts with SETDB1. Interacts with SIN3A. Interacts with SMAD3. Interacts with SMAD4; positively regulated by ZBTB7A. Interacts with SMARCAD1. Interacts with SMARCA4/BRG1. Interacts with SMYD2. Interacts with SMYD4 (via MYND-type zinc finger). Interacts with SP1; the interaction deacetylates SP1 and regulates its transcriptional activity. Interacts with SP3; the interaction deacetylates SP3 and regulates its transcriptional activity. In vitro, C(18) ceramides increase this interaction and the subsequent SP3 deacetylation and SP3-mediated repression of the TERT promoter. Interacts with SPEN/MINT. Interacts with SPHK2. Interacts with SUV39H1. Interacts with TGIF. Interacts with TGIF2. Interacts with TRAF6. Interacts with TRIM28; the interaction recruits HDAC1 to E2F1 and inhibits its acetylation. Interacts with TSC22D3 isoform 1; this interaction affects HDAC1 activity on MYOG promoter and thus inhibits MYOD1 transcriptional activity. Interacts with UHRF1. Interacts with UHRF2. Interacts with ZBTB7A. Interacts with ZMYND8. Interacts with ZMYND15. Interacts with ZNF431. Interacts with ZNF516; this interaction is enhanced in the presence of PWWP2B. Interacts with ZNF541. Interacts with ZNF638. Interacts with ZNHIT1. Interacts with the non-histone region of MACROH2A1. Identified in a complex with HDAC2, KCTD19, DNTTIP1 and ZNF541. Interacts with VRK1. As to quaternary structure, (Microbial infection) Interacts with SV40 large T antigen. Zn(2+) serves as cofactor. In terms of processing, sumoylated on Lys-444 and Lys-476; which promotes enzymatic activity. Desumoylated by SENP1. Phosphorylation on Ser-421 and Ser-423 promotes enzymatic activity and interactions with NuRD and SIN3 complexes. Phosphorylated by CDK5. Post-translationally, ubiquitinated by CHFR, leading to its degradation by the proteasome. Ubiquitinated by KCTD11, leading to proteasomal degradation. In terms of tissue distribution, ubiquitous, with higher levels in heart, pancreas and testis, and lower levels in kidney and brain.

Its subcellular location is the nucleus. The enzyme catalyses N(6)-acetyl-L-lysyl-[histone] + H2O = L-lysyl-[histone] + acetate. It catalyses the reaction N(6)-acetyl-L-lysyl-[protein] + H2O = L-lysyl-[protein] + acetate. It carries out the reaction N(6)-(2E)-butenoyl-L-lysyl-[protein] + H2O = (2E)-2-butenoate + L-lysyl-[protein]. The catalysed reaction is N(6)-[(S)-lactoyl]-L-lysyl-[protein] + H2O = (S)-lactate + L-lysyl-[protein]. Inositol tetraphosphate (1D-myo-inositol 1,4,5,6-tetrakisphosphate) may act as an intermolecular glue between HDAC1 and N-Cor repressor complex components. Its function is as follows. Histone deacetylase that catalyzes the deacetylation of lysine residues on the N-terminal part of the core histones (H2A, H2B, H3 and H4). Histone deacetylation gives a tag for epigenetic repression and plays an important role in transcriptional regulation, cell cycle progression and developmental events. Histone deacetylases act via the formation of large multiprotein complexes. Acts as a component of the histone deacetylase NuRD complex which participates in the remodeling of chromatin. As part of the SIN3B complex is recruited downstream of the constitutively active genes transcriptional start sites through interaction with histones and mitigates histone acetylation and RNA polymerase II progression within transcribed regions contributing to the regulation of transcription. Also functions as a deacetylase for non-histone targets, such as NR1D2, RELA, SP1, SP3, STAT3 and TSHZ3. Deacetylates SP proteins, SP1 and SP3, and regulates their function. Component of the BRG1-RB1-HDAC1 complex, which negatively regulates the CREST-mediated transcription in resting neurons. Upon calcium stimulation, HDAC1 is released from the complex and CREBBP is recruited, which facilitates transcriptional activation. Deacetylates TSHZ3 and regulates its transcriptional repressor activity. Deacetylates 'Lys-310' in RELA and thereby inhibits the transcriptional activity of NF-kappa-B. Deacetylates NR1D2 and abrogates the effect of KAT5-mediated relieving of NR1D2 transcription repression activity. Component of a RCOR/GFI/KDM1A/HDAC complex that suppresses, via histone deacetylase (HDAC) recruitment, a number of genes implicated in multilineage blood cell development. Involved in CIART-mediated transcriptional repression of the circadian transcriptional activator: CLOCK-BMAL1 heterodimer. Required for the transcriptional repression of circadian target genes, such as PER1, mediated by the large PER complex or CRY1 through histone deacetylation. In addition to protein deacetylase activity, also has protein-lysine deacylase activity: acts as a protein decrotonylase and delactylase by mediating decrotonylation ((2E)-butenoyl) and delactylation (lactoyl) of histones, respectively. This chain is Histone deacetylase 1, found in Homo sapiens (Human).